A 634-amino-acid chain; its full sequence is Chaperone protein HtpG (634 aa).

Residues 1 to 344 are a; substrate-binding; that stretch reads MSETVSQNKE…SNDLPLNVSR (344 aa). The interval 345-561 is b; the sequence is EILQDNKVTQ…DYEMGTQMAK (217 aa). The segment at 562–634 is c; that stretch reads LLAAAGQAVP…GAINKLLTKV (73 aa).

The protein belongs to the heat shock protein 90 family. Homodimer.

The protein resides in the cytoplasm. Molecular chaperone. Has ATPase activity. In Vibrio parahaemolyticus serotype O3:K6 (strain RIMD 2210633), this protein is Chaperone protein HtpG.